Here is a 310-residue protein sequence, read N- to C-terminus: Proline iminopeptidase (310 aa).

The AB hydrolase-1 domain maps to 33–290 (PVIFLHGGPG…RVVQAGHRAF (258 aa)). The active-site Nucleophile is the Ser-107. Asp-260 is a catalytic residue. Catalysis depends on His-287, which acts as the Proton donor.

Belongs to the peptidase S33 family.

The protein localises to the cytoplasm. It catalyses the reaction Release of N-terminal proline from a peptide.. Functionally, specifically catalyzes the removal of N-terminal proline residues from peptides. The protein is Proline iminopeptidase (pip) of Neisseria meningitidis serogroup B (strain ATCC BAA-335 / MC58).